The chain runs to 72 residues: High-potential iron-sulfur protein isozyme 1 (72 aa).

Residues C34, C37, C51, and C65 each coordinate [4Fe-4S] cluster.

The protein belongs to the high-potential iron-sulfur protein (HiPIP) family. As to quaternary structure, homodimer.

In terms of biological role, specific class of high-redox-potential 4Fe-4S ferredoxins. Functions in anaerobic electron transport in most purple and in some other photosynthetic bacteria and in at least one genus (Paracoccus) of halophilic, denitrifying bacteria. The sequence is that of High-potential iron-sulfur protein isozyme 1 (hip1) from Ectothiorhodospira shaposhnikovii (Ectothiorhodospira vacuolata).